Here is an 81-residue protein sequence, read N- to C-terminus: Conotoxin ViKr92 (81 aa).

The N-terminal stretch at 1–22 (MKLTWMMIVAVLFLTAWTFVTA) is a signal peptide. A propeptide spanning residues 23–51 (DDTRYKLENPFLKARNELQKLEASQLNER) is cleaved from the precursor. 3 disulfides stabilise this stretch: cysteine 53–cysteine 70, cysteine 60–cysteine 74, and cysteine 69–cysteine 78.

It belongs to the conotoxin O1 superfamily. Expressed by the venom duct.

It localises to the secreted. This is Conotoxin ViKr92 from Conus virgo (Virgin cone).